A 251-amino-acid polypeptide reads, in one-letter code: Imidazole glycerol phosphate synthase subunit HisF (251 aa).

Residues aspartate 11 and aspartate 130 contribute to the active site.

The protein belongs to the HisA/HisF family. Heterodimer of HisH and HisF.

It localises to the cytoplasm. It catalyses the reaction 5-[(5-phospho-1-deoxy-D-ribulos-1-ylimino)methylamino]-1-(5-phospho-beta-D-ribosyl)imidazole-4-carboxamide + L-glutamine = D-erythro-1-(imidazol-4-yl)glycerol 3-phosphate + 5-amino-1-(5-phospho-beta-D-ribosyl)imidazole-4-carboxamide + L-glutamate + H(+). It participates in amino-acid biosynthesis; L-histidine biosynthesis; L-histidine from 5-phospho-alpha-D-ribose 1-diphosphate: step 5/9. In terms of biological role, IGPS catalyzes the conversion of PRFAR and glutamine to IGP, AICAR and glutamate. The HisF subunit catalyzes the cyclization activity that produces IGP and AICAR from PRFAR using the ammonia provided by the HisH subunit. In Pelagibacter ubique (strain HTCC1062), this protein is Imidazole glycerol phosphate synthase subunit HisF.